Here is a 142-residue protein sequence, read N- to C-terminus: Inner membrane protein YqaA (142 aa).

Residues 1 to 2 (MS) are Cytoplasmic-facing. A helical membrane pass occupies residues 3–23 (EALSLFSLFASSFLSATLLPG). Topologically, residues 24 to 26 (NSE) are periplasmic. Residues 27–47 (VVLVAMLLSGISHPWVLVLTA) form a helical membrane-spanning segment. Residues 48–86 (TMGNSLGGLTNVILGRFFPLRKTSRWQEKATGWLKRYGA) are Cytoplasmic-facing. Residues 87–107 (VTLLLSWMPVVGDLLCLLAGW) form a helical membrane-spanning segment. The Periplasmic portion of the chain corresponds to 108-142 (MRISWGPVIFFLCLGKALRYVAVAAATVQGMMWWH).

To H.influenzae HI_0489.

It is found in the cell inner membrane. The sequence is that of Inner membrane protein YqaA (yqaA) from Escherichia coli (strain K12).